Consider the following 114-residue polypeptide: Transmembrane protein 14DP (114 aa).

4 helical membrane passes run Leu8–Val28, Ala36–Leu56, Val63–Met80, and Tyr83–Ala103.

It belongs to the TMEM14 family.

Its subcellular location is the membrane. This Homo sapiens (Human) protein is Transmembrane protein 14DP (TMEM14DP).